Here is a 307-residue protein sequence, read N- to C-terminus: uncharacterized protein (307 aa).

Basic and acidic residues-rich tracts occupy residues 42 to 52 (TCRSPGEDKCP) and 112 to 121 (QKKEEPEGSH). Residues 42–153 (TCRSPGEDKC…VPPAVASASA (112 aa)) form a disordered region. Basic residues predominate over residues 129–139 (KQHKKAKKRKS).

This is an uncharacterized protein from Mus musculus (Mouse).